Reading from the N-terminus, the 200-residue chain is MASKIEILKANLEAALGARVVSLTEAIGELTLVVKASDYLEVAKTLRDDPKLCFEQLIDLCGVDYQTYGDGAYDGPRFAAVSQLLSVTNNWRLRLRVFAPDDDLPIVASLVDIWTSANWYEREAFDLYGLVFEGHPDLRRILTDYGFIGHPFRKDFPVSGYVEMRYDPEEKRVVYQPVTIEPREITPRVIREDRYGGLKH.

The protein belongs to the complex I 30 kDa subunit family. NDH-1 is composed of 14 different subunits. Subunits NuoB, C, D, E, F, and G constitute the peripheral sector of the complex.

Its subcellular location is the cell inner membrane. It catalyses the reaction a quinone + NADH + 5 H(+)(in) = a quinol + NAD(+) + 4 H(+)(out). Its function is as follows. NDH-1 shuttles electrons from NADH, via FMN and iron-sulfur (Fe-S) centers, to quinones in the respiratory chain. The immediate electron acceptor for the enzyme in this species is believed to be ubiquinone. Couples the redox reaction to proton translocation (for every two electrons transferred, four hydrogen ions are translocated across the cytoplasmic membrane), and thus conserves the redox energy in a proton gradient. The sequence is that of NADH-quinone oxidoreductase subunit C from Burkholderia ambifaria (strain ATCC BAA-244 / DSM 16087 / CCUG 44356 / LMG 19182 / AMMD) (Burkholderia cepacia (strain AMMD)).